A 362-amino-acid polypeptide reads, in one-letter code: Chorismate synthase (362 aa).

Arg47 lines the NADP(+) pocket. FMN-binding positions include 124–126, Gly286, 301–305, and Arg327; these read RSS and KPTAT.

Belongs to the chorismate synthase family. Homotetramer. The cofactor is FMNH2.

The enzyme catalyses 5-O-(1-carboxyvinyl)-3-phosphoshikimate = chorismate + phosphate. It participates in metabolic intermediate biosynthesis; chorismate biosynthesis; chorismate from D-erythrose 4-phosphate and phosphoenolpyruvate: step 7/7. Functionally, catalyzes the anti-1,4-elimination of the C-3 phosphate and the C-6 proR hydrogen from 5-enolpyruvylshikimate-3-phosphate (EPSP) to yield chorismate, which is the branch point compound that serves as the starting substrate for the three terminal pathways of aromatic amino acid biosynthesis. This reaction introduces a second double bond into the aromatic ring system. The chain is Chorismate synthase from Gloeothece citriformis (strain PCC 7424) (Cyanothece sp. (strain PCC 7424)).